The primary structure comprises 297 residues: Nitrogenase iron protein (297 aa).

ATP is bound at residue Gly11–Ser18. Cys99 is a [4Fe-4S] cluster binding site. Arg102 carries the post-translational modification ADP-ribosylarginine; by dinitrogenase reductase ADP-ribosyltransferase. Cys133 serves as a coordination point for [4Fe-4S] cluster.

This sequence belongs to the NifH/BchL/ChlL family. As to quaternary structure, homodimer. [4Fe-4S] cluster is required as a cofactor. Post-translationally, the reversible ADP-ribosylation of Arg-102 inactivates the nitrogenase reductase and regulates nitrogenase activity.

It carries out the reaction N2 + 8 reduced [2Fe-2S]-[ferredoxin] + 16 ATP + 16 H2O = H2 + 8 oxidized [2Fe-2S]-[ferredoxin] + 2 NH4(+) + 16 ADP + 16 phosphate + 6 H(+). Its function is as follows. The key enzymatic reactions in nitrogen fixation are catalyzed by the nitrogenase complex, which has 2 components: the iron protein and the molybdenum-iron protein. This is Nitrogenase iron protein from Mesorhizobium japonicum (strain LMG 29417 / CECT 9101 / MAFF 303099) (Mesorhizobium loti (strain MAFF 303099)).